Reading from the N-terminus, the 397-residue chain is UPF0261 protein mlr3387 (397 aa).

It belongs to the UPF0261 family.

The chain is UPF0261 protein mlr3387 from Mesorhizobium japonicum (strain LMG 29417 / CECT 9101 / MAFF 303099) (Mesorhizobium loti (strain MAFF 303099)).